The chain runs to 280 residues: tRNA(Ile)-lysidine synthase, plastid (280 aa).

ATP is bound at residue 28–33 (SAGQDS).

Belongs to the tRNA(Ile)-lysidine synthase family.

It localises to the plastid. It catalyses the reaction cytidine(34) in tRNA(Ile2) + L-lysine + ATP = lysidine(34) in tRNA(Ile2) + AMP + diphosphate + H(+). Its function is as follows. Ligates lysine onto the cytidine present at position 34 of the AUA codon-specific tRNA(Ile) that contains the anticodon CAU, in an ATP-dependent manner. Cytidine is converted to lysidine, thus changing the amino acid specificity of the tRNA from methionine to isoleucine. The polypeptide is tRNA(Ile)-lysidine synthase, plastid (tilS) (Helicosporidium sp. subsp. Simulium jonesii (Green alga)).